Consider the following 596-residue polypeptide: Aspartate--tRNA(Asp/Asn) ligase (596 aa).

Glu175 is an L-aspartate binding site. The segment at 199 to 202 (QQYK) is aspartate. The L-aspartate site is built by Arg221 and His454. 221 to 223 (RDE) serves as a coordination point for ATP. ATP is bound at residue Glu488. An L-aspartate-binding site is contributed by Arg495. 540–543 (GIDR) lines the ATP pocket.

Belongs to the class-II aminoacyl-tRNA synthetase family. Type 1 subfamily. Homodimer.

It is found in the cytoplasm. The catalysed reaction is tRNA(Asx) + L-aspartate + ATP = L-aspartyl-tRNA(Asx) + AMP + diphosphate. In terms of biological role, aspartyl-tRNA synthetase with relaxed tRNA specificity since it is able to aspartylate not only its cognate tRNA(Asp) but also tRNA(Asn). Reaction proceeds in two steps: L-aspartate is first activated by ATP to form Asp-AMP and then transferred to the acceptor end of tRNA(Asp/Asn). This Mesorhizobium japonicum (strain LMG 29417 / CECT 9101 / MAFF 303099) (Mesorhizobium loti (strain MAFF 303099)) protein is Aspartate--tRNA(Asp/Asn) ligase.